The chain runs to 166 residues: Small ribosomal subunit protein uS5 (166 aa).

The S5 DRBM domain occupies 12 to 75; the sequence is YIEKLVQVNR…EAARRNMIQV (64 aa).

Belongs to the universal ribosomal protein uS5 family. Part of the 30S ribosomal subunit. Contacts proteins S4 and S8.

Its function is as follows. With S4 and S12 plays an important role in translational accuracy. Located at the back of the 30S subunit body where it stabilizes the conformation of the head with respect to the body. In Pseudomonas savastanoi pv. phaseolicola (strain 1448A / Race 6) (Pseudomonas syringae pv. phaseolicola (strain 1448A / Race 6)), this protein is Small ribosomal subunit protein uS5.